Consider the following 322-residue polypeptide: Cysteine synthase (322 aa).

2 residues coordinate hydrogen sulfide: Asn8 and Arg35. An N6-(pyridoxal phosphate)lysine modification is found at Lys42. Residues Asn72 and 177-181 (GTGGT) each bind pyridoxal 5'-phosphate. Leu269 serves as a coordination point for hydrogen sulfide. Ser273 is a binding site for pyridoxal 5'-phosphate.

This sequence belongs to the cysteine synthase/cystathionine beta-synthase family. In terms of assembly, homodimer. Requires pyridoxal 5'-phosphate as cofactor.

It carries out the reaction O-acetyl-L-serine + hydrogen sulfide = L-cysteine + acetate. It participates in amino-acid biosynthesis; L-cysteine biosynthesis; L-cysteine from L-serine: step 2/2. The sequence is that of Cysteine synthase (cysK) from Buchnera aphidicola subsp. Schizaphis graminum (strain Sg).